Consider the following 100-residue polypeptide: Thioredoxin (100 aa).

The 100-residue stretch at 1 to 100 (MKHITNKAEL…PKNELKELLK (100 aa)) folds into the Thioredoxin domain. A disulfide bridge links Cys29 with Cys32.

This sequence belongs to the thioredoxin family.

In terms of biological role, participates in various redox reactions through the reversible oxidation of its active center dithiol to a disulfide and catalyzes dithiol-disulfide exchange reactions. This is Thioredoxin (trxA) from Mycoplasmoides gallisepticum (strain R(low / passage 15 / clone 2)) (Mycoplasma gallisepticum).